Reading from the N-terminus, the 37-residue chain is Conotoxin r11e (37 aa).

Disulfide bonds link C2–C16, C9–C21, C15–C26, and C20–C33. E13 and E14 each carry 4-carboxyglutamate. W34 bears the 6'-bromotryptophan mark.

As to expression, expressed by the venom duct.

It localises to the secreted. Causes hyperactivity, circular motion, convulsion, urination and death, when injected into 13- to 15-day-old mice. Causes gasping, backward swimming or swimming in a vertical direction and death, when intraperitoneally injected into goldfish. This chain is Conotoxin r11e, found in Conus radiatus (Rayed cone).